A 231-amino-acid chain; its full sequence is Phosphatidylserine decarboxylase proenzyme (231 aa).

S188 (schiff-base intermediate with substrate; via pyruvic acid) is an active-site residue. Position 188 is a pyruvic acid (Ser); by autocatalysis (S188).

It belongs to the phosphatidylserine decarboxylase family. PSD-A subfamily. In terms of assembly, heterodimer of a large membrane-associated beta subunit and a small pyruvoyl-containing alpha subunit. Requires pyruvate as cofactor. Post-translationally, is synthesized initially as an inactive proenzyme. Formation of the active enzyme involves a self-maturation process in which the active site pyruvoyl group is generated from an internal serine residue via an autocatalytic post-translational modification. Two non-identical subunits are generated from the proenzyme in this reaction, and the pyruvate is formed at the N-terminus of the alpha chain, which is derived from the carboxyl end of the proenzyme. The post-translation cleavage follows an unusual pathway, termed non-hydrolytic serinolysis, in which the side chain hydroxyl group of the serine supplies its oxygen atom to form the C-terminus of the beta chain, while the remainder of the serine residue undergoes an oxidative deamination to produce ammonia and the pyruvoyl prosthetic group on the alpha chain.

Its subcellular location is the cell membrane. It catalyses the reaction a 1,2-diacyl-sn-glycero-3-phospho-L-serine + H(+) = a 1,2-diacyl-sn-glycero-3-phosphoethanolamine + CO2. Its pathway is phospholipid metabolism; phosphatidylethanolamine biosynthesis; phosphatidylethanolamine from CDP-diacylglycerol: step 2/2. Catalyzes the formation of phosphatidylethanolamine (PtdEtn) from phosphatidylserine (PtdSer). The sequence is that of Phosphatidylserine decarboxylase proenzyme from Rickettsia africae (strain ESF-5).